Consider the following 587-residue polypeptide: Chaperonin GroEL 1 (587 aa).

Residues 29–32 (TIGP), 86–90 (DGTTT), Gly413, and Asp492 each bind ATP.

It belongs to the chaperonin (HSP60) family. As to quaternary structure, forms a cylinder of 14 subunits composed of two heptameric rings stacked back-to-back. Interacts with the co-chaperonin GroES.

The protein resides in the cytoplasm. It carries out the reaction ATP + H2O + a folded polypeptide = ADP + phosphate + an unfolded polypeptide.. Together with its co-chaperonin GroES, plays an essential role in assisting protein folding. The GroEL-GroES system forms a nano-cage that allows encapsulation of the non-native substrate proteins and provides a physical environment optimized to promote and accelerate protein folding. The sequence is that of Chaperonin GroEL 1 from Prochlorococcus marinus (strain MIT 9515).